The primary structure comprises 130 residues: Large ribosomal subunit protein bL12 (130 aa).

This sequence belongs to the bacterial ribosomal protein bL12 family. Homodimer. Part of the ribosomal stalk of the 50S ribosomal subunit. Forms a multimeric L10(L12)X complex, where L10 forms an elongated spine to which 2 to 4 L12 dimers bind in a sequential fashion. Binds GTP-bound translation factors.

Functionally, forms part of the ribosomal stalk which helps the ribosome interact with GTP-bound translation factors. Is thus essential for accurate translation. In Mycobacterium bovis (strain ATCC BAA-935 / AF2122/97), this protein is Large ribosomal subunit protein bL12.